Here is a 169-residue protein sequence, read N- to C-terminus: Gamma-crystallin 2 (169 aa).

2 Beta/gamma crystallin 'Greek key' domains span residues 1 to 34 (YEDR…KVDS) and 35 to 77 (GCWM…KVIP). The segment at 78–82 (QQKGP) is connecting peptide. 2 consecutive Beta/gamma crystallin 'Greek key' domains span residues 83 to 123 (HKMK…NVLE) and 124 to 166 (GHWI…RRVL).

The protein belongs to the beta/gamma-crystallin family. Monomer.

Crystallins are the dominant structural components of the vertebrate eye lens. In Rana temporaria (European common frog), this protein is Gamma-crystallin 2.